The sequence spans 78 residues: Mambalgin-1 (78 aa).

The signal sequence occupies residues 1 to 21; the sequence is MKTLLLTLLVVTIVCLDLGYS. Cystine bridges form between C24–C40, C33–C58, C62–C70, and C71–C76.

Belongs to the three-finger toxin family. Short-chain subfamily. Mambalgin sub-subfamily. As to expression, expressed by the venom gland.

It localises to the secreted. Functionally, this three-finger toxin inhibits ASIC channels. It acts as a gating modifier toxin by decreasing the apparent proton sensitivity of activation and by slightly increasing the apparent proton sensitivity for inactivation. It binds more tightly to the closed state and to a much lesser extent the inactivated/desensitized state of ASIC1a isoform of ASIC1. It interacts directly with the outside surface of the thumb domain of chicken ASIC1a (ASIC1a), but does not insert into the acidic pocket as suggested for mambalgin-2. This binding leads to relocation of the thumb domain that could disrupt the acidic pocket of cASIC1a. It reversibly inhibits rat ASIC1a (IC(50)=3.4-55 nM), rat ASIC1a-ASIC2b (IC(50)=61 nM), rat ASIC1a-ASIC1b (IC(50)=72 nM), human ASIC1a (IC(50)=127-580 nM), chicken ASIC1a (IC(50)=123.6 nM), rat ASIC1b (IC(50)=22.2-203 nM), rat ASIC1a-ASIC2a (IC(50)=152-252 nM). In vivo, it shows a potent naloxone-resistant analgesic effect against acute and inflammatory pain upon central and peripheral injection. In addition, it also has an opioid-independent effect on both thermal and mechanical inflammatory pain after systemic administration and is effective against neuropathic pain. The protein is Mambalgin-1 of Dendroaspis polylepis polylepis (Black mamba).